The chain runs to 195 residues: Glycerol-3-phosphate acyltransferase 2 (195 aa).

6 helical membrane-spanning segments follow: residues 4 to 24 (VVSL…VAGV), 52 to 72 (GAAA…VGLA), 73 to 93 (LWLA…GVVF), 115 to 135 (AMLV…LALI), 150 to 170 (AIPF…SRLG), and 171 to 191 (GGAE…HLLA).

It belongs to the PlsY family. In terms of assembly, probably interacts with PlsX.

The protein localises to the cell membrane. The catalysed reaction is an acyl phosphate + sn-glycerol 3-phosphate = a 1-acyl-sn-glycero-3-phosphate + phosphate. The protein operates within lipid metabolism; phospholipid metabolism. Catalyzes the transfer of an acyl group from acyl-phosphate (acyl-PO(4)) to glycerol-3-phosphate (G3P) to form lysophosphatidic acid (LPA). This enzyme utilizes acyl-phosphate as fatty acyl donor, but not acyl-CoA or acyl-ACP. In Deinococcus radiodurans (strain ATCC 13939 / DSM 20539 / JCM 16871 / CCUG 27074 / LMG 4051 / NBRC 15346 / NCIMB 9279 / VKM B-1422 / R1), this protein is Glycerol-3-phosphate acyltransferase 2.